The chain runs to 134 residues: Cytochrome b5 isoform B (134 aa).

The Cytochrome b5 heme-binding domain occupies 5–81; the sequence is AKIFTLSEVS…MEQYYVGEID (77 aa). Heme is bound by residues His-40 and His-64. The helical transmembrane segment at 107–127 threads the bilayer; it reads FIIKLLQFLVPLAILGLAVGI.

The protein belongs to the cytochrome b5 family. In terms of assembly, interacts with CER1, FAH1, FAH2 and BI-1.

It localises to the endoplasmic reticulum membrane. Functionally, membrane bound hemoprotein which function as an electron carrier for several membrane bound oxygenases, including fatty acid desaturases. The polypeptide is Cytochrome b5 isoform B (Arabidopsis thaliana (Mouse-ear cress)).